Consider the following 263-residue polypeptide: Probable elongation factor 1-beta/1-delta 2 (263 aa).

Serine 2 is modified (N-acetylserine). Positions 112 to 153 (QGQTSSVAAPAAAPAAAKEEAAGDDDFDLFGSEDEEEDEEKK) are disordered. Over residues 133-150 (AGDDDFDLFGSEDEEEDE) the composition is skewed to acidic residues.

Belongs to the EF-1-beta/EF-1-delta family. As to quaternary structure, EF-1 is composed of 4 subunits: alpha, beta, delta, and gamma.

Its function is as follows. EF-1-beta and EF-1-delta stimulate the exchange of GDP bound to EF-1-alpha to GTP. This is Probable elongation factor 1-beta/1-delta 2 from Caenorhabditis elegans.